A 349-amino-acid polypeptide reads, in one-letter code: 4-hydroxythreonine-4-phosphate dehydrogenase (349 aa).

T136 contributes to the substrate binding site. A divalent metal cation contacts are provided by H171, H216, and H281. Residues K289, N298, and R307 each coordinate substrate.

The protein belongs to the PdxA family. In terms of assembly, homodimer. It depends on a divalent metal cation as a cofactor.

Its subcellular location is the cytoplasm. It catalyses the reaction 4-(phosphooxy)-L-threonine + NAD(+) = 3-amino-2-oxopropyl phosphate + CO2 + NADH. It functions in the pathway cofactor biosynthesis; pyridoxine 5'-phosphate biosynthesis; pyridoxine 5'-phosphate from D-erythrose 4-phosphate: step 4/5. Functionally, catalyzes the NAD(P)-dependent oxidation of 4-(phosphooxy)-L-threonine (HTP) into 2-amino-3-oxo-4-(phosphooxy)butyric acid which spontaneously decarboxylates to form 3-amino-2-oxopropyl phosphate (AHAP). The protein is 4-hydroxythreonine-4-phosphate dehydrogenase of Synechocystis sp. (strain ATCC 27184 / PCC 6803 / Kazusa).